We begin with the raw amino-acid sequence, 143 residues long: Small ribosomal subunit protein uS12 (143 aa).

Residues 1–20 (MGKCRGLRTARKLRSHRRDH) show a composition bias toward basic residues. A disordered region spans residues 1–26 (MGKCRGLRTARKLRSHRRDHKWHDKQ). Lys-37 is covalently cross-linked (Glycyl lysine isopeptide (Lys-Gly) (interchain with G-Cter in SUMO2)). Residue Lys-54 is modified to N6-succinyllysine. Pro-62 is modified (3-hydroxyproline). Lys-135 bears the N6-acetyllysine mark.

It belongs to the universal ribosomal protein uS12 family. As to quaternary structure, component of the 40S small ribosomal subunit. Part of the small subunit (SSU) processome, composed of more than 70 proteins and the RNA chaperone small nucleolar RNA (snoRNA) U3. In terms of assembly, (Microbial infection) Interacts with the African swine fever virus (ASFV) ubiquitin-conjugating enzyme UBCv1; this interaction probably plays a role in the viral regulation of host protein synthesis. Post-translationally, hydroxylation at Pro-62 affects translation termination efficiency.

Its subcellular location is the cytoplasm. It is found in the cytosol. It localises to the rough endoplasmic reticulum. The protein resides in the nucleus. The protein localises to the nucleolus. Functionally, component of the ribosome, a large ribonucleoprotein complex responsible for the synthesis of proteins in the cell. The small ribosomal subunit (SSU) binds messenger RNAs (mRNAs) and translates the encoded message by selecting cognate aminoacyl-transfer RNA (tRNA) molecules. The large subunit (LSU) contains the ribosomal catalytic site termed the peptidyl transferase center (PTC), which catalyzes the formation of peptide bonds, thereby polymerizing the amino acids delivered by tRNAs into a polypeptide chain. The nascent polypeptides leave the ribosome through a tunnel in the LSU and interact with protein factors that function in enzymatic processing, targeting, and the membrane insertion of nascent chains at the exit of the ribosomal tunnel. Plays an important role in translational accuracy. Part of the small subunit (SSU) processome, first precursor of the small eukaryotic ribosomal subunit. During the assembly of the SSU processome in the nucleolus, many ribosome biogenesis factors, an RNA chaperone and ribosomal proteins associate with the nascent pre-rRNA and work in concert to generate RNA folding, modifications, rearrangements and cleavage as well as targeted degradation of pre-ribosomal RNA by the RNA exosome. In Sus scrofa (Pig), this protein is Small ribosomal subunit protein uS12 (RPS23).